The following is a 429-amino-acid chain: Inositol-3-phosphate synthase 1 (429 aa).

Residues 12–32 form a helical membrane-spanning segment; that stretch reads LGVLVVGVGGAVATTMIVGTL. The NAD(+) site is built by alanine 22, valine 23, aspartate 79, alanine 116, alanine 165, threonine 167, tyrosine 201, serine 244, arginine 276, aspartate 277, and lysine 290.

The protein belongs to the myo-inositol 1-phosphate synthase family. Homotetramer. NAD(+) serves as cofactor.

It is found in the membrane. The catalysed reaction is D-glucose 6-phosphate = 1D-myo-inositol 3-phosphate. Its pathway is polyol metabolism; myo-inositol biosynthesis; myo-inositol from D-glucose 6-phosphate: step 1/2. In terms of biological role, key enzyme in myo-inositol biosynthesis pathway that catalyzes the conversion of glucose 6-phosphate to 1D-myo-inositol 3-phosphate in a NAD-dependent manner. This chain is Inositol-3-phosphate synthase 1, found in Bacteroides thetaiotaomicron (strain ATCC 29148 / DSM 2079 / JCM 5827 / CCUG 10774 / NCTC 10582 / VPI-5482 / E50).